We begin with the raw amino-acid sequence, 347 residues long: MGRHSDNSLQESANHTVLLTSPTNTIPKDSRQRSQQFMQNLQDEICTALEQLDGKASFHQDHWERAEGGEGRTRVIREGRVFEQGGVNFSAVWGNSLPASILAQRPEAAGHEFFATGTSMVLHPRNPYVPTVHLNYRYFEAGPIWWFGGGADLTPYYAFKEDAVHFHQTLKNACDVHNPEYYPTFKRWCDEYFYLRHREEQRGIGGIFFDYQDASGKLYVESQTDSSVAIYSQKVGNVARNWEDIFAFVQSCGQAFLPAYLPIVERRQGIEYGDRQRNFQLYRRGRYVEFNLVYDRGTVFGLQTKGRTESILMSLPPLARWEYCYEPEAGSPEAELTEVFLQPRDWV.

Positions 1–31 (MGRHSDNSLQESANHTVLLTSPTNTIPKDSR) are disordered. Residues 7-31 (NSLQESANHTVLLTSPTNTIPKDSR) are compositionally biased toward polar residues. The tract at residues 75 to 84 (VIREGRVFEQ) is important for dimerization. A substrate-binding site is contributed by S119. H133 acts as the Proton donor in catalysis. Residues 135-137 (NYR) and 305-310 (KGRTES) contribute to the substrate site. The segment at 287–322 (YVEFNLVYDRGTVFGLQTKGRTESILMSLPPLARWE) is important for dimerization.

It belongs to the aerobic coproporphyrinogen-III oxidase family. As to quaternary structure, homodimer.

It is found in the cytoplasm. The catalysed reaction is coproporphyrinogen III + O2 + 2 H(+) = protoporphyrinogen IX + 2 CO2 + 2 H2O. It participates in porphyrin-containing compound metabolism; protoporphyrin-IX biosynthesis; protoporphyrinogen-IX from coproporphyrinogen-III (O2 route): step 1/1. Its function is as follows. Key enzyme in heme biosynthesis. Catalyzes the oxidative decarboxylation of propionic acid side chains of rings A and B of coproporphyrinogen III. This is Coproporphyrinogen-III oxidase, aerobic 2 from Nostoc sp. (strain PCC 7120 / SAG 25.82 / UTEX 2576).